A 324-amino-acid polypeptide reads, in one-letter code: Dehydrogenase/reductase SDR family member 7C-A (324 aa).

An N-terminal signal peptide occupies residues 1 to 17 (MAVPSVMVLPLLIVVFA). 41–65 (VITDAVSGMGSECARLFHAGGARLV) serves as a coordination point for NAD(+). Residue S178 coordinates substrate. The active-site Proton acceptor is the Y191.

The protein belongs to the short-chain dehydrogenases/reductases (SDR) family.

It localises to the secreted. In terms of biological role, putative oxidoreductase. The polypeptide is Dehydrogenase/reductase SDR family member 7C-A (dhrs7ca) (Danio rerio (Zebrafish)).